The chain runs to 192 residues: Transmembrane protein 276 (192 aa).

Residues 1–32 form the signal peptide; it reads MVSKPRTEWSTVLSHLVLAGVSLHAAVSSVQS. 4 helical membrane-spanning segments follow: residues 35-55, 63-83, 92-112, and 114-134; these read GAAA…APGP, AGAW…FHWV, LLLG…PEGC, and VAGQ…AVFT.

It localises to the membrane. This Mus musculus (Mouse) protein is Transmembrane protein 276.